A 173-amino-acid chain; its full sequence is 2-C-methyl-D-erythritol 2,4-cyclodiphosphate synthase (173 aa).

Residues D17 and H19 each coordinate a divalent metal cation. Residues 17 to 19 and 49 to 50 each bind 4-CDP-2-C-methyl-D-erythritol 2-phosphate; these read DVH and HS. Position 57 (H57) interacts with a divalent metal cation. Residues 76–80, 147–150, F154, and R157 contribute to the 4-CDP-2-C-methyl-D-erythritol 2-phosphate site; these read FPNTD and TTTE.

It belongs to the IspF family. Homotrimer. A divalent metal cation is required as a cofactor.

The catalysed reaction is 4-CDP-2-C-methyl-D-erythritol 2-phosphate = 2-C-methyl-D-erythritol 2,4-cyclic diphosphate + CMP. The protein operates within isoprenoid biosynthesis; isopentenyl diphosphate biosynthesis via DXP pathway; isopentenyl diphosphate from 1-deoxy-D-xylulose 5-phosphate: step 4/6. Involved in the biosynthesis of isopentenyl diphosphate (IPP) and dimethylallyl diphosphate (DMAPP), two major building blocks of isoprenoid compounds. Catalyzes the conversion of 4-diphosphocytidyl-2-C-methyl-D-erythritol 2-phosphate (CDP-ME2P) to 2-C-methyl-D-erythritol 2,4-cyclodiphosphate (ME-CPP) with a corresponding release of cytidine 5-monophosphate (CMP). This is 2-C-methyl-D-erythritol 2,4-cyclodiphosphate synthase from Ehrlichia chaffeensis (strain ATCC CRL-10679 / Arkansas).